The chain runs to 530 residues: Probable NADH-specific resorcinol 4-hydroxylase (530 aa).

The catalysed reaction is resorcinol + NADH + O2 + H(+) = benzene-1,2,4-triol + NAD(+) + H2O. Functionally, single-component hydroxylase that is part of the gamma-resorcylate (GRA) degradation pathway. GRA is initially converted by GRA decarboxylase to resorcinol, which is hydroxylated by resorcinol 4-hydroxylase. The sequence is that of Probable NADH-specific resorcinol 4-hydroxylase (tsdB) from Rhodococcus jostii (strain RHA1).